We begin with the raw amino-acid sequence, 353 residues long: Anthranilate phosphoribosyltransferase (353 aa).

5-phospho-alpha-D-ribose 1-diphosphate contacts are provided by residues Gly87, 90–91 (GD), Thr95, 97–100 (NIST), 115–123 (KHGNRAASS), and Thr127. Residue Gly87 coordinates anthranilate. Position 99 (Ser99) interacts with Mg(2+). Residue Asn118 participates in anthranilate binding. Position 173 (Arg173) interacts with anthranilate. Residues Asp231 and Glu232 each contribute to the Mg(2+) site.

Belongs to the anthranilate phosphoribosyltransferase family. Homodimer. Mg(2+) is required as a cofactor.

The catalysed reaction is N-(5-phospho-beta-D-ribosyl)anthranilate + diphosphate = 5-phospho-alpha-D-ribose 1-diphosphate + anthranilate. It functions in the pathway amino-acid biosynthesis; L-tryptophan biosynthesis; L-tryptophan from chorismate: step 2/5. Functionally, catalyzes the transfer of the phosphoribosyl group of 5-phosphorylribose-1-pyrophosphate (PRPP) to anthranilate to yield N-(5'-phosphoribosyl)-anthranilate (PRA). The polypeptide is Anthranilate phosphoribosyltransferase (Salinispora arenicola (strain CNS-205)).